Reading from the N-terminus, the 198-residue chain is NAD(P)H dehydrogenase (quinone) (198 aa).

A Flavodoxin-like domain is found at 4 to 189; sequence ILVLYYSMYG…SIARYQGEYV (186 aa). Residues 10-15 and 78-80 each bind FMN; these read SMYGHI and TRF. Y12 provides a ligand contact to NAD(+). W98 contacts substrate. FMN contacts are provided by residues 113–118 and H133; that span reads STGTGG.

This sequence belongs to the WrbA family. FMN serves as cofactor.

The enzyme catalyses a quinone + NADH + H(+) = a quinol + NAD(+). It carries out the reaction a quinone + NADPH + H(+) = a quinol + NADP(+). The sequence is that of NAD(P)H dehydrogenase (quinone) from Salmonella paratyphi A (strain ATCC 9150 / SARB42).